The sequence spans 602 residues: ATP-dependent lipid A-core flippase 1 (602 aa).

5 helical membrane-spanning segments follow: residues 36-56, 80-100, 154-174, 176-196, and 261-281; these read LGFVAAIIGMLGYAAIDVYFL, LFIIVAFTVRGIAHFIANYCL, ILTIVQQSAFIIGLLGLMFYY, WQLSLIFLLITPIIAVIVSVV, and ASVPIIQVIASFALAFVFYAI. An ABC transmembrane type-1 domain is found at 39-321; the sequence is VAAIIGMLGY…LTNVNSEFQQ (283 aa). In terms of domain architecture, ABC transporter spans 362–599; it reads YKNTNTMTTS…QGAYAQLHSF (238 aa). 398-405 provides a ligand contact to ATP; that stretch reads GRSGSGKS.

The protein belongs to the ABC transporter superfamily. Lipid exporter (TC 3.A.1.106) family. As to quaternary structure, homodimer.

Its subcellular location is the cell inner membrane. It carries out the reaction ATP + H2O + lipid A-core oligosaccharideSide 1 = ADP + phosphate + lipid A-core oligosaccharideSide 2.. In terms of biological role, involved in lipopolysaccharide (LPS) biosynthesis. Translocates lipid A-core from the inner to the outer leaflet of the inner membrane. Transmembrane domains (TMD) form a pore in the inner membrane and the ATP-binding domain (NBD) is responsible for energy generation. The chain is ATP-dependent lipid A-core flippase 1 from Colwellia psychrerythraea (strain 34H / ATCC BAA-681) (Vibrio psychroerythus).